Reading from the N-terminus, the 978-residue chain is Glycine dehydrogenase (decarboxylating) (978 aa).

Lys-726 carries the N6-(pyridoxal phosphate)lysine modification.

This sequence belongs to the GcvP family. In terms of assembly, the glycine cleavage system is composed of four proteins: P, T, L and H. The cofactor is pyridoxal 5'-phosphate.

The enzyme catalyses N(6)-[(R)-lipoyl]-L-lysyl-[glycine-cleavage complex H protein] + glycine + H(+) = N(6)-[(R)-S(8)-aminomethyldihydrolipoyl]-L-lysyl-[glycine-cleavage complex H protein] + CO2. The glycine cleavage system catalyzes the degradation of glycine. The P protein binds the alpha-amino group of glycine through its pyridoxal phosphate cofactor; CO(2) is released and the remaining methylamine moiety is then transferred to the lipoamide cofactor of the H protein. The chain is Glycine dehydrogenase (decarboxylating) from Paraburkholderia xenovorans (strain LB400).